Here is a 375-residue protein sequence, read N- to C-terminus: CCN family member 1 (375 aa).

Positions 1-22 are cleaved as a signal peptide; that stretch reads MGSAGARPALAAALLCLARLAL. The IGFBP N-terminal domain maps to 23-94; the sequence is GSPCPAVCQC…AATNGICRAQ (72 aa). 6 cysteine pairs are disulfide-bonded: cysteine 26–cysteine 50, cysteine 30–cysteine 52, cysteine 32–cysteine 53, cysteine 39–cysteine 56, cysteine 64–cysteine 78, and cysteine 70–cysteine 91. The 67-residue stretch at 98-164 folds into the VWFC domain; the sequence is RPCEYNSKIY…GQCCEEWVCD (67 aa). The TSP type-1 domain maps to 223-268; it reads KCIVQTTSWSQCSKTCGTGISTRVTNDNPDCKLIKETRICEVRPCG. A heparin-binding region spans residues 274 to 310; that stretch reads SLKKGKKCTKTKKSPSPVRFTYAGCSSVKKYRPKYCG. 5 disulfide bridges follow: cysteine 281-cysteine 318, cysteine 298-cysteine 332, cysteine 309-cysteine 348, cysteine 312-cysteine 350, and cysteine 317-cysteine 354. In terms of domain architecture, CTCK spans 281–355; the sequence is CTKTKKSPSP…QSCRCNYNCP (75 aa).

It belongs to the CCN family.

Its subcellular location is the secreted. In terms of biological role, probable secreted regulatory protein. This Gallus gallus (Chicken) protein is CCN family member 1 (CCN1).